The following is a 169-amino-acid chain: MPPTRDPFQQPTLDNDDSYLGELRASKKLPYKNPTHLAQQQEPWSRLNSTPTITSMRRDAYYFDPEIPKDDLDFRLAALYNHHTGTFKNKSEILLNQKTTQDTYRTKIQFPGEFLTPPTPPITFLANIRHWINPKKESIHSIQGSIVSPHTAATNGGYSRKKDGGFFST.

Disordered regions lie at residues 26–45 and 150–169; these read SKKLPYKNPTHLAQQQEPWS and HTAATNGGYSRKKDGGFFST. Polar residues predominate over residues 36–45; the sequence is HLAQQQEPWS. A compositionally biased stretch (basic and acidic residues) spans 160 to 169; sequence RKKDGGFFST.

Microtubule inner protein component of sperm flagellar doublet microtubules. As to expression, expressed in cerebrum, cerebellum, gastrocnemius muscle, spinal cord and lung tissues.

It is found in the cytoplasm. It localises to the cytoskeleton. The protein resides in the flagellum axoneme. Its subcellular location is the cilium axoneme. Microtubule inner protein (MIP) part of the dynein-decorated doublet microtubules (DMTs) in cilia axoneme, which is required for motile cilia beating. May play an important role for the maintenance of myelin-axon integrity. May affect intracellular Ca(2+) homeostasis. This chain is Cilia- and flagella-associated protein 276, found in Homo sapiens (Human).